Consider the following 366-residue polypeptide: N-acetyl-L-citrulline deacetylase (366 aa).

Co(2+)-binding residues include H72 and D103. E130 (proton donor/acceptor) is an active-site residue. Residue E155 coordinates Co(2+).

It belongs to the peptidase M20A family. N-acetylcitrulline deacetylase subfamily. In terms of assembly, forms homodimers in the crystal, but higher order oligomers may form in solution. It depends on Co(2+) as a cofactor.

The catalysed reaction is N(2)-acetyl-L-citrulline + H2O = L-citrulline + acetate. It carries out the reaction N(2)-acetyl-L-ornithine + H2O = L-ornithine + acetate. Its pathway is amino-acid biosynthesis; L-arginine biosynthesis. Functionally, catalyzes the deacetylation of N-acetyl-L-citrulline to produce L-citrulline. This is a step in an alternative arginine biosynthesis pathway. Is also able to catalyze the deacetylation of N-acetylornithine in vitro, with almost equal velocity. However, this reaction may be not relevant in vivo since Xanthomonas does not possess the canonical argF gene and cannot convert ornithine to citrulline via ArgF'. This chain is N-acetyl-L-citrulline deacetylase, found in Xanthomonas campestris pv. campestris (strain ATCC 33913 / DSM 3586 / NCPPB 528 / LMG 568 / P 25).